The chain runs to 495 residues: UDP-N-acetylmuramoyl-L-alanyl-D-glutamate--2,6-diaminopimelate ligase (495 aa).

Position 29 (Ser-29) interacts with UDP-N-acetyl-alpha-D-muramoyl-L-alanyl-D-glutamate. 111-117 (GTNGKTS) contacts ATP. UDP-N-acetyl-alpha-D-muramoyl-L-alanyl-D-glutamate-binding positions include 153 to 154 (TT), Ser-180, Gln-186, and Arg-188. At Lys-220 the chain carries N6-carboxylysine. Meso-2,6-diaminopimelate-binding positions include Arg-384, 408 to 411 (DNPR), Gly-459, and Glu-463. The short motif at 408–411 (DNPR) is the Meso-diaminopimelate recognition motif element.

This sequence belongs to the MurCDEF family. MurE subfamily. The cofactor is Mg(2+). Carboxylation is probably crucial for Mg(2+) binding and, consequently, for the gamma-phosphate positioning of ATP.

The protein localises to the cytoplasm. The catalysed reaction is UDP-N-acetyl-alpha-D-muramoyl-L-alanyl-D-glutamate + meso-2,6-diaminopimelate + ATP = UDP-N-acetyl-alpha-D-muramoyl-L-alanyl-gamma-D-glutamyl-meso-2,6-diaminopimelate + ADP + phosphate + H(+). The protein operates within cell wall biogenesis; peptidoglycan biosynthesis. In terms of biological role, catalyzes the addition of meso-diaminopimelic acid to the nucleotide precursor UDP-N-acetylmuramoyl-L-alanyl-D-glutamate (UMAG) in the biosynthesis of bacterial cell-wall peptidoglycan. The protein is UDP-N-acetylmuramoyl-L-alanyl-D-glutamate--2,6-diaminopimelate ligase of Xanthomonas oryzae pv. oryzae (strain MAFF 311018).